The sequence spans 284 residues: NADH-cytochrome b5 reductase 1 (284 aa).

The chain crosses the membrane as a helical span at residues 8–28 (PLVIFSTLAAIILAAVAVYVV). Residues 41–144 (DVFQKFPLIE…RGPKGFFTYT (104 aa)) enclose the FAD-binding FR-type domain. Residues 124 to 139 (DSKSVGDHIEVRGPKG) and 150 to 182 (HLGMIAGGTGIAPMYQVLTAILTNPDDKTKISL) contribute to the FAD site.

This sequence belongs to the flavoprotein pyridine nucleotide cytochrome reductase family. In terms of assembly, monomer. Component of the 2-(3-amino-3-carboxypropyl)histidine synthase complex composed of DPH1, DPH2, DPH3 and a NADH-dependent reductase, predominantly CBR1. It depends on FAD as a cofactor.

The protein localises to the mitochondrion outer membrane. It catalyses the reaction 2 Fe(III)-[cytochrome b5] + NADH = 2 Fe(II)-[cytochrome b5] + NAD(+) + H(+). The catalysed reaction is 2 Fe(3+)-[Dph3] + NADH = 2 Fe(2+)-[Dph3] + NAD(+) + H(+). Its pathway is protein modification; peptidyl-diphthamide biosynthesis. Functionally, NADH-dependent reductase for DPH3 and cytochrome b5. Required for the first step of diphthamide biosynthesis, a post-translational modification of histidine which occurs in elongation factor 2. DPH1 and DPH2 transfer a 3-amino-3-carboxypropyl (ACP) group from S-adenosyl-L-methionine (SAM) to a histidine residue, the reaction is assisted by a reduction system comprising DPH3 and a NADH-dependent reductase, predominantly CBR1. By reducing DPH3, also involved in the formation of the tRNA wobble base modification mcm5s 2U (5-methoxycarbonylmethyl-2-thiouridine), mediated by the elongator complex. The cytochrome b5/NADH cytochrome b5 reductase electron transfer system supports the catalytic activity of several sterol biosynthetic enzymes. This chain is NADH-cytochrome b5 reductase 1 (CBR1), found in Meyerozyma guilliermondii (strain ATCC 6260 / CBS 566 / DSM 6381 / JCM 1539 / NBRC 10279 / NRRL Y-324) (Yeast).